Reading from the N-terminus, the 80-residue chain is ATP synthase subunit c (80 aa).

Helical transmembrane passes span 8 to 28 (MIYF…AIGI) and 55 to 75 (IVMG…LYLI).

The protein belongs to the ATPase C chain family. As to quaternary structure, F-type ATPases have 2 components, F(1) - the catalytic core - and F(0) - the membrane proton channel. F(1) has five subunits: alpha(3), beta(3), gamma(1), delta(1), epsilon(1). F(0) has three main subunits: a(1), b(2) and c(10-14). The alpha and beta chains form an alternating ring which encloses part of the gamma chain. F(1) is attached to F(0) by a central stalk formed by the gamma and epsilon chains, while a peripheral stalk is formed by the delta and b chains.

The protein localises to the cell inner membrane. Functionally, f(1)F(0) ATP synthase produces ATP from ADP in the presence of a proton or sodium gradient. F-type ATPases consist of two structural domains, F(1) containing the extramembraneous catalytic core and F(0) containing the membrane proton channel, linked together by a central stalk and a peripheral stalk. During catalysis, ATP synthesis in the catalytic domain of F(1) is coupled via a rotary mechanism of the central stalk subunits to proton translocation. Its function is as follows. Key component of the F(0) channel; it plays a direct role in translocation across the membrane. A homomeric c-ring of between 10-14 subunits forms the central stalk rotor element with the F(1) delta and epsilon subunits. This is ATP synthase subunit c from Aeromonas salmonicida (strain A449).